A 322-amino-acid polypeptide reads, in one-letter code: UDP-N-acetylenolpyruvoylglucosamine reductase (322 aa).

One can recognise an FAD-binding PCMH-type domain in the interval R36–G202. R182 is a catalytic residue. The active-site Proton donor is the S231. E301 is a catalytic residue.

The protein belongs to the MurB family. Requires FAD as cofactor.

It is found in the cytoplasm. It carries out the reaction UDP-N-acetyl-alpha-D-muramate + NADP(+) = UDP-N-acetyl-3-O-(1-carboxyvinyl)-alpha-D-glucosamine + NADPH + H(+). It participates in cell wall biogenesis; peptidoglycan biosynthesis. Its function is as follows. Cell wall formation. This Brucella melitensis biotype 2 (strain ATCC 23457) protein is UDP-N-acetylenolpyruvoylglucosamine reductase.